The chain runs to 190 residues: Xanthine phosphoribosyltransferase (190 aa).

The xanthine site is built by Leu20 and Asn27. 128–132 lines the 5-phospho-alpha-D-ribose 1-diphosphate pocket; the sequence is ANGHA. Lys156 is a binding site for xanthine.

It belongs to the purine/pyrimidine phosphoribosyltransferase family. Xpt subfamily. Homodimer.

Its subcellular location is the cytoplasm. The enzyme catalyses XMP + diphosphate = xanthine + 5-phospho-alpha-D-ribose 1-diphosphate. It functions in the pathway purine metabolism; XMP biosynthesis via salvage pathway; XMP from xanthine: step 1/1. Its function is as follows. Converts the preformed base xanthine, a product of nucleic acid breakdown, to xanthosine 5'-monophosphate (XMP), so it can be reused for RNA or DNA synthesis. The protein is Xanthine phosphoribosyltransferase of Pseudomonas paraeruginosa (strain DSM 24068 / PA7) (Pseudomonas aeruginosa (strain PA7)).